A 196-amino-acid chain; its full sequence is Transmembrane protein 52 (196 aa).

Residues 1–28 (MAPGPSATQGILLLLPLLPLSQVTLGSA) form the signal peptide. Residues 47-67 (LWHVGLILLAILLMLLCGVTA) traverse the membrane as a helical segment. The tract at residues 162 to 196 (EEVAAPSEKTNSLPEALEPETTGGPQEPGPSAQRP) is disordered.

Its subcellular location is the membrane. This chain is Transmembrane protein 52 (Tmem52), found in Mus musculus (Mouse).